The primary structure comprises 2075 residues: Autophagy-related protein 2 homolog B (2075 aa).

The region spanning alanine 13–arginine 107 is the Chorein N-terminal domain. Phosphoserine is present on residues serine 255, serine 379, serine 496, serine 839, serine 885, serine 898, and serine 1007. At tyrosine 1011 the chain carries Phosphotyrosine. A phosphoserine mark is found at serine 1015 and serine 1017. Residue threonine 1021 is modified to Phosphothreonine. A disordered region spans residues lysine 1373 to alanine 1403. Position 1525 is a phosphoserine (serine 1525). Disordered stretches follow at residues threonine 1570–threonine 1593, glutamate 1759–serine 1792, and arginine 2055–aspartate 2075. Residues proline 1578–threonine 1587 are compositionally biased toward polar residues. Positions isoleucine 2058–aspartate 2075 are enriched in basic and acidic residues.

The protein belongs to the ATG2 family. As to quaternary structure, interacts with WDR45/WIPI4.

Its subcellular location is the preautophagosomal structure membrane. The protein localises to the lipid droplet. The protein resides in the endoplasmic reticulum membrane. The catalysed reaction is a 1,2-diacyl-sn-glycero-3-phospho-L-serine(in) = a 1,2-diacyl-sn-glycero-3-phospho-L-serine(out). The enzyme catalyses a 1,2-diacyl-sn-glycero-3-phosphoethanolamine(in) = a 1,2-diacyl-sn-glycero-3-phosphoethanolamine(out). Functionally, lipid transfer protein required for both autophagosome formation and regulation of lipid droplet morphology and dispersion. Tethers the edge of the isolation membrane (IM) to the endoplasmic reticulum (ER) and mediates direct lipid transfer from ER to IM for IM expansion. Binds to the ER exit site (ERES), which is the membrane source for autophagosome formation, and extracts phospholipids from the membrane source and transfers them to ATG9 (ATG9A or ATG9B) to the IM for membrane expansion. Lipid transfer activity is enhanced by WDR45/WIPI4, which promotes ATG2B-association with phosphatidylinositol 3-monophosphate (PI3P)-containing membranes. This Mus musculus (Mouse) protein is Autophagy-related protein 2 homolog B.